A 761-amino-acid polypeptide reads, in one-letter code: Nitrogen fixation protein FixI (761 aa).

Residues 1–120 (MSCCTMDAES…SAPESDKTRN (120 aa)) are Cytoplasmic-facing. The region spanning 36–106 (RQLDLSVSDV…EINSAGYRAH (71 aa)) is the HMA domain. Cysteine 47 and cysteine 50 together coordinate a metal cation. A helical membrane pass occupies residues 121–142 (QLLLAIGVSGFAAPNIMLLSVS). The Extracellular portion of the chain corresponds to 143 to 155 (VWSGADAATRDMF). Residues 156–177 (HWISAMIAAPALVYAGRFFFKS) form a helical membrane-spanning segment. The Cytoplasmic portion of the chain corresponds to 178-184 (AWNALRH). A helical membrane pass occupies residues 185-205 (GRTNMDVPISVTVSLSYAVSL). The Extracellular segment spans residues 206-217 (WETVHHGEHAWF). A helical membrane pass occupies residues 218-238 (DASVSLLFFLLIGRTLDHIMR). Topologically, residues 239 to 367 (EKARAAINGL…RARYRRIADR (129 aa)) are cytoplasmic. The helical transmembrane segment at 368 to 390 (AATLYSPVVHLLALVSFLAWGFL) threads the bilayer. Over 391–395 (GGDWK) the chain is Extracellular. A helical transmembrane segment spans residues 396–415 (QAMLVAVAVLIITCPCALGL). Residues 416-691 (AVPVVQVVAA…AVARRSASLI (276 aa)) are Cytoplasmic-facing. The active-site 4-aspartylphosphate intermediate is the aspartate 453. Mg(2+) contacts are provided by aspartate 637 and aspartate 641. A helical membrane pass occupies residues 692–711 (RQNFALAIGYNVLAVPIAIA). Residues 712–716 (GLATP) lie on the Extracellular side of the membrane. A helical membrane pass occupies residues 717-735 (LIAAVAMSTSSIIVVTNAL). The Cytoplasmic segment spans residues 736–761 (RLNGFGKRPDMHIRRGIGRSAEVKAA).

The protein belongs to the cation transport ATPase (P-type) (TC 3.A.3) family. Type IB subfamily.

It is found in the cell membrane. It carries out the reaction ATP + H2O = ADP + phosphate + H(+). In terms of biological role, fixI is a pump of a specific cation involved in symbiotic nitrogen fixation. The four proteins FixG, FixH, FixI, and FixS may participate in a membrane-bound complex coupling the FixI cation pump with a redox process catalyzed by FixG. This is Nitrogen fixation protein FixI (fixI) from Rhizobium leguminosarum bv. viciae.